A 146-amino-acid chain; its full sequence is MEINRDEFKEVVVNIGRVTKVVKGGRRFRFNALVVVGNKNGLVGFGLGKAKEVPDAIKKAVDDAFKNIIKVNVKGTTIAHDIEHKYNASKILLKPASEGTGVIAGGSARPVIELAGIKDILTKSLGSNNPYNVVRATIDALSRIKA.

Residues 8–71 (FKEVVVNIGR…DDAFKNIIKV (64 aa)) enclose the S5 DRBM domain.

This sequence belongs to the universal ribosomal protein uS5 family. As to quaternary structure, part of the 30S ribosomal subunit. Contacts proteins S4 and S8.

Functionally, with S4 and S12 plays an important role in translational accuracy. Located at the back of the 30S subunit body where it stabilizes the conformation of the head with respect to the body. In Wolinella succinogenes (strain ATCC 29543 / DSM 1740 / CCUG 13145 / JCM 31913 / LMG 7466 / NCTC 11488 / FDC 602W) (Vibrio succinogenes), this protein is Small ribosomal subunit protein uS5.